A 394-amino-acid polypeptide reads, in one-letter code: Protein DDI1 homolog 2 (394 aa).

In terms of domain architecture, Ubiquitin-like spans M1–E81. A disordered region spans residues A82–D128. The span at P107–D119 shows a compositional bias: pro residues. The active site involves D247. The Ubiquitin-binding motif lies at E371–D390.

The protein belongs to the DDI1 family. In terms of assembly, homodimer.

It is found in the cytoplasm. The protein resides in the cytosol. The protein localises to the chromosome. Its function is as follows. Aspartic protease that mediates the cleavage of NFE2L1/NRF1 at 'Leu-104', thereby promoting release of NFE2L1/NRF1 from the endoplasmic reticulum membrane. Ubiquitination of NFE2L1/NRF1 is a prerequisite for cleavage, suggesting that DDI2 specifically recognizes and binds ubiquitinated NFE2L1/NRF1. Seems to act as a proteasomal shuttle which links the proteasome and replication fork proteins like RTF2. Required for cellular survival following replication stress. The polypeptide is Protein DDI1 homolog 2 (ddi2) (Xenopus tropicalis (Western clawed frog)).